Consider the following 322-residue polypeptide: Large ribosomal subunit protein uL29m (322 aa).

The tract at residues 1 to 44 (MLNVQRGLHTTVRLSARTKYTKPKPKPQARVIKSEPSQVTHHDN) is disordered.

This sequence belongs to the universal ribosomal protein uL29 family. Component of the mitochondrial large ribosomal subunit. Mature mitochondrial ribosomes consist of a small (37S) and a large (54S) subunit. The 37S subunit contains at least 33 different proteins and 1 molecule of RNA (15S). The 54S subunit contains at least 45 different proteins and 1 molecule of RNA (21S).

It is found in the mitochondrion. This Vanderwaltozyma polyspora (strain ATCC 22028 / DSM 70294 / BCRC 21397 / CBS 2163 / NBRC 10782 / NRRL Y-8283 / UCD 57-17) (Kluyveromyces polysporus) protein is Large ribosomal subunit protein uL29m (MRPL4).